The chain runs to 184 residues: Mediator of RNA polymerase II transcription subunit 30 (184 aa).

Residues 136-179 (SQLRFASEEKREILEVNKKLKQKNQQLKQIMDQLRNLIWDINSM) adopt a coiled-coil conformation.

This sequence belongs to the Mediator complex subunit 30 family. Component of the Mediator complex.

It localises to the nucleus. Its function is as follows. Component of the Mediator complex, a coactivator involved in the regulated transcription of nearly all RNA polymerase II-dependent genes. Mediator functions as a bridge to convey information from gene-specific regulatory proteins to the basal RNA polymerase II transcription machinery. Mediator is recruited to promoters by direct interactions with regulatory proteins and serves as a scaffold for the assembly of a functional preinitiation complex with RNA polymerase II and the general transcription factors. This Xenopus laevis (African clawed frog) protein is Mediator of RNA polymerase II transcription subunit 30 (med30).